Reading from the N-terminus, the 902-residue chain is Gamma-tubulin complex component 2 (902 aa).

Position 83 is a phosphotyrosine (tyrosine 83). Positions alanine 874–glutamine 902 are disordered.

The protein belongs to the TUBGCP family. In terms of assembly, component of the gamma-tubulin ring complex (gTuRC) consisting of TUBGCP2, TUBGCP3, TUBGCP4, TUBGCP5 and TUBGCP6 and gamma-tubulin TUBG1 or TUBG2. TUBGCP2, TUBGCP3, TUBGCP4, TUBGCP5 and TUBGCP6 assemble in a 5:5:2:1:1 stoichiometry; each is associated with a gamma-tubulin, thereby arranging 14 gamma-tubulins in a helical manner. Gamma-tubulin at the first position is blocked by TUBGCP3 at the last position, allowing 13 protafilaments to grow into a microtubule. The gTuRC (via TUBGCP3 and TUBGCP6) interacts with ACTB and MZT1; the interactions form a luminal bridge that stabilizes the initial structure during complex assembly. The gTuRC (via TUBGCP2) interacts with MZT2A/MZT2B and CDK5RAP2 (via CM1 motif); the interactions play a role in gTuRC activation. Interacts with ATF5; the ATF5:PCNT:polyglutamylated tubulin (PGT) tripartite unites the mother centriole and the pericentriolar material (PCM) in the centrosome. As to expression, ubiquitously expressed.

The protein localises to the cytoplasm. It localises to the cytoskeleton. It is found in the microtubule organizing center. The protein resides in the centrosome. Its function is as follows. Component of the gamma-tubulin ring complex (gTuRC) which mediates microtubule nucleation. The gTuRC regulates the minus-end nucleation of alpha-beta tubulin heterodimers that grow into microtubule protafilaments, a critical step in centrosome duplication and spindle formation. Plays a role in neuronal migration. The sequence is that of Gamma-tubulin complex component 2 (TUBGCP2) from Homo sapiens (Human).